We begin with the raw amino-acid sequence, 240 residues long: Ion-translocating oxidoreductase complex subunit E (240 aa).

The next 5 helical transmembrane spans lie at leucine 41 to valine 61, leucine 71 to alanine 91, glutamate 95 to glycine 115, serine 130 to leucine 150, and glycine 184 to leucine 204.

Belongs to the NqrDE/RnfAE family. The complex is composed of six subunits: RnfA, RnfB, RnfC, RnfD, RnfE and RnfG.

The protein resides in the cell inner membrane. Its function is as follows. Part of a membrane-bound complex that couples electron transfer with translocation of ions across the membrane. The chain is Ion-translocating oxidoreductase complex subunit E from Pseudomonas aeruginosa (strain ATCC 15692 / DSM 22644 / CIP 104116 / JCM 14847 / LMG 12228 / 1C / PRS 101 / PAO1).